The chain runs to 144 residues: Transcriptional regulator MraZ (144 aa).

SpoVT-AbrB domains follow at residues 5 to 47 (TYTP…PRAE) and 77 to 120 (TDEQ…DAQA).

The protein belongs to the MraZ family. Forms oligomers.

It is found in the cytoplasm. The protein resides in the nucleoid. This chain is Transcriptional regulator MraZ, found in Mycolicibacterium gilvum (strain PYR-GCK) (Mycobacterium gilvum (strain PYR-GCK)).